Here is a 658-residue protein sequence, read N- to C-terminus: Katanin p80 WD40 repeat-containing subunit B1 (658 aa).

The tract at residues 1–284 is interaction with dynein; the sequence is MATPVVTKTA…VADLAICNDQ (284 aa). The interval 1-300 is interaction with centrosomes; sequence MATPVVTKTA…SQSNVSSYVV (300 aa). WD repeat units follow at residues 18 to 58, 61 to 100, 103 to 142, 145 to 184, 187 to 226, and 229 to 269; these read AHAS…CIMS, GHTS…ILRT, GHKA…CVFR, GHSQ…MMSE, GHTG…VVSC, and GEPG…DVVL. The interaction with PAFAH1B1 stretch occupies residues 285–437; sequence LIGVAFSQSN…LPQLPVPNLE (153 aa). The segment covering 311–329 has biased composition (polar residues); it reads VTQDPVQANQPLTQQTPNP. 2 disordered regions span residues 311 to 419 and 434 to 458; these read VTQD…EVSK and PNLE…PDII. The span at 352-374 shows a compositional bias: basic and acidic residues; that stretch reads HNSESERRSPSSEDDRDERESRA. A Phosphothreonine modification is found at threonine 395. The interval 436–658 is interaction with KATNA1 and NDEL1; the sequence is LEVPARPSVM…ELHLLMASLD (223 aa).

The protein belongs to the WD repeat KATNB1 family. In terms of assembly, interacts with KATNA1. This interaction enhances the microtubule binding and severing activity of KATNA1 and also targets this activity to the centrosome. This interaction is weakly competed by KATNBL1 which has a lower affinity for it. Interacts with ASPM; the katanin complex formation KATNA1:KATNB1 is required for the association of ASPM. Interacts with dynein, microtubules, NDEL1 and PAFAH1B1. Interacts with KATNAL1; this interaction is weakly competed by KATNBL1 which has a lower affinity for it. Interacts with CAMSAP2 and CAMSAP3; leading to regulate the length of CAMSAP-decorated microtubule stretches.

The protein localises to the cytoplasm. It is found in the cytoskeleton. Its subcellular location is the microtubule organizing center. It localises to the centrosome. The protein resides in the spindle pole. The protein localises to the spindle. Functionally, participates in a complex which severs microtubules in an ATP-dependent manner. May act to target the enzymatic subunit of this complex to sites of action such as the centrosome. Microtubule severing may promote rapid reorganization of cellular microtubule arrays and the release of microtubules from the centrosome following nucleation. Microtubule release from the mitotic spindle poles may allow depolymerization of the microtubule end proximal to the spindle pole, leading to poleward microtubule flux and poleward motion of chromosome. The function in regulating microtubule dynamics at spindle poles seems to depend on the association of the katanin KATNA1:KATNB1 complex with ASPM which recruits it to microtubules. Reversely KATNA1:KATNB1 can enhance ASPM blocking activity on microtubule minus-end growth. Microtubule release within the cell body of neurons may be required for their transport into neuronal processes by microtubule-dependent motor proteins. This transport is required for axonal growth. The protein is Katanin p80 WD40 repeat-containing subunit B1 (Katnb1) of Mus musculus (Mouse).